The chain runs to 91 residues: Large ribosomal subunit protein uL23c (91 aa).

This sequence belongs to the universal ribosomal protein uL23 family. Part of the 50S ribosomal subunit.

The protein localises to the plastid. It is found in the chloroplast. Functionally, binds to 23S rRNA. The chain is Large ribosomal subunit protein uL23c (rpl23) from Huperzia lucidula (Shining clubmoss).